The following is a 466-amino-acid chain: Glutamate decarboxylase (466 aa).

Lys277 carries the post-translational modification N6-(pyridoxal phosphate)lysine.

This sequence belongs to the group II decarboxylase family. Requires pyridoxal 5'-phosphate as cofactor.

The enzyme catalyses L-glutamate + H(+) = 4-aminobutanoate + CO2. Functionally, converts internalized glutamate to GABA and increases the internal pH. Involved in glutamate-dependent acid resistance. The chain is Glutamate decarboxylase (gadB) from Lactococcus lactis subsp. lactis (strain IL1403) (Streptococcus lactis).